The primary structure comprises 215 residues: L-fuculose phosphate aldolase (215 aa).

Residues 28 to 29, 43 to 44, and 71 to 72 each bind substrate; these read GN, TG, and SS. The active-site Proton donor/acceptor is Glu73. Zn(2+) contacts are provided by Glu73, His92, His94, and His155.

This sequence belongs to the aldolase class II family. AraD/FucA subfamily. As to quaternary structure, homotetramer. The cofactor is Zn(2+).

It catalyses the reaction L-fuculose 1-phosphate = (S)-lactaldehyde + dihydroxyacetone phosphate. The protein operates within carbohydrate degradation; L-fucose degradation; L-lactaldehyde and glycerone phosphate from L-fucose: step 3/3. With respect to regulation, inhibited by phosphoglycolohydroxamate (PGH). Involved in the degradation of L-fucose and D-arabinose. Catalyzes the reversible cleavage of L-fuculose 1-phosphate (Fuc1P) to yield dihydroxyacetone phosphate (DHAP) and L-lactaldehyde. Also able to catalyze the reversible cleavage of D-ribulose 1-phosphate, but FucA has a higher affinity for L-fuculose 1-phosphate and L-lactaldehyde than for D-ribulose 1-phosphate and glycolaldehyde, respectively. FucA possesses a high specificity for the dihydroxyacetone phosphate (DHAP), but accepts a great variety of different aldehydes and has a strong preference for L-configurated alpha-hydroxy aldehydes. FucA generates a vicinal diol unit having the absolute (3R,4R)-cis configuration (D-erythro). The sequence is that of L-fuculose phosphate aldolase from Escherichia coli (strain K12).